We begin with the raw amino-acid sequence, 367 residues long: MQANKNIQKLTPYLSIPHKIWNSSQSNILKLDWNEATIPPSPYVIESIKKFLVNGNLNWYPNTKNLYLLDKIAEYTKQINSSFVELFEGSDSAHECIIDVFLDKCDKIGIVSPTYDNFRSRANGVGIETISFTLDDNFNLDFDSLEYFIHEKRIKLLYLCNPNNPTGKSYNIQKIKSLIINNPNVMFIIDEAYYEFTSQSVCDLVEQCNNLIITRTFSKAFALASFRIGYIISHPENIESINKLRNPKSVPMLSQIAANAALEDLQYMRDYVDEVSCARMEFVKFLNTLTTGGGGIFNDSVANFVLIQNENISLFVGFLEKEGIFIRNYSHLISKNCRISIGTRNQMSYVAEKIQEFAKKQGGFHLV.

Position 219 is an N6-(pyridoxal phosphate)lysine (Lys-219).

It belongs to the class-II pyridoxal-phosphate-dependent aminotransferase family. It depends on pyridoxal 5'-phosphate as a cofactor.

It catalyses the reaction dihydroxyacetone phosphate + L-glutamate = (S)-serinol phosphate + 2-oxoglutarate. Its pathway is capsule biogenesis; capsule polysaccharide biosynthesis. Its function is as follows. Pyridoxal phosphate (PLP)-dependent transaminase involved in the biosynthesis of amidated D-glucuronic acid structures found on the capsular polysaccharide (CPS) of C.jejuni. Catalyzes the transamination of dihydroxyacetone phosphate (DHAP) to (S)-serinol phosphate in the presence of L-glutamate. Less active with L-aspartate. No activity with dihydroxyacetone or L-alanine. This chain is Dihydroxyacetone phosphate transaminase Cj1437c, found in Campylobacter jejuni subsp. jejuni serotype O:2 (strain ATCC 700819 / NCTC 11168).